The sequence spans 97 residues: Co-chaperonin GroES (97 aa).

This sequence belongs to the GroES chaperonin family. In terms of assembly, heptamer of 7 subunits arranged in a ring. Interacts with the chaperonin GroEL.

The protein localises to the cytoplasm. Functionally, together with the chaperonin GroEL, plays an essential role in assisting protein folding. The GroEL-GroES system forms a nano-cage that allows encapsulation of the non-native substrate proteins and provides a physical environment optimized to promote and accelerate protein folding. GroES binds to the apical surface of the GroEL ring, thereby capping the opening of the GroEL channel. The sequence is that of Co-chaperonin GroES from Stutzerimonas stutzeri (Pseudomonas stutzeri).